Here is a 330-residue protein sequence, read N- to C-terminus: DNA primase small subunit PriS (330 aa).

Residues aspartate 101 and aspartate 103 contribute to the active site. 4 residues coordinate Zn(2+): cysteine 116, cysteine 119, cysteine 128, and aspartate 131. The active site involves aspartate 235.

Belongs to the eukaryotic-type primase small subunit family. As to quaternary structure, heterodimer of a small subunit (PriS) and a large subunit (PriL). Requires Mg(2+) as cofactor. It depends on Mn(2+) as a cofactor.

Functionally, catalytic subunit of DNA primase, an RNA polymerase that catalyzes the synthesis of short RNA molecules used as primers for DNA polymerase during DNA replication. The small subunit contains the primase catalytic core and has DNA synthesis activity on its own. Binding to the large subunit stabilizes and modulates the activity, increasing the rate of DNA synthesis while decreasing the length of the DNA fragments, and conferring RNA synthesis capability. The DNA polymerase activity may enable DNA primase to also catalyze primer extension after primer synthesis. May also play a role in DNA repair. The chain is DNA primase small subunit PriS from Saccharolobus islandicus (strain M.16.27) (Sulfolobus islandicus).